The following is a 290-amino-acid chain: Pirin (290 aa).

The Fe cation site is built by histidine 56, histidine 58, histidine 101, and glutamate 103.

It belongs to the pirin family. As to quaternary structure, may interact with NF1/CTF1. Interacts with BCL3. Identified in a complex comprised of PIR, BLC3, NFKB1 and target DNA. It depends on Fe cation as a cofactor. As to expression, highly expressed in a subset of melanomas. Detected at very low levels in most tissues (at protein level). Expressed in all tissues, with highest level of expression in heart and liver.

It localises to the nucleus. It is found in the cytoplasm. The enzyme catalyses quercetin + O2 = 2-(3,4-dihydroxybenzoyloxy)-4,6-dihydroxybenzoate + CO. It participates in flavonoid metabolism; quercetin degradation. With respect to regulation, inhibited by kojic acid, sodium diethyldithiocarbamate and 1,10-phenanthroline monohydrochloride. Functionally, transcriptional coregulator of NF-kappa-B which facilitates binding of NF-kappa-B proteins to target kappa-B genes in a redox-state-dependent manner. May be required for efficient terminal myeloid maturation of hematopoietic cells. Has quercetin 2,3-dioxygenase activity (in vitro). The protein is Pirin (PIR) of Homo sapiens (Human).